Here is a 155-residue protein sequence, read N- to C-terminus: Transcriptional repressor NrdR (155 aa).

The segment at 3–34 (CPYCGHLEDRVVDSRETQDGQATRRRRACLSC) is a zinc-finger region. One can recognise an ATP-cone domain in the interval 49–139 (PQVVKKDGRR…VYRAFRDVGE (91 aa)).

Belongs to the NrdR family. Requires Zn(2+) as cofactor.

Negatively regulates transcription of bacterial ribonucleotide reductase nrd genes and operons by binding to NrdR-boxes. This chain is Transcriptional repressor NrdR, found in Anaeromyxobacter sp. (strain K).